A 75-amino-acid chain; its full sequence is Dermaseptin-DA2 (75 aa).

Residues 1-22 (MALVKKSLFLVLFLGLVSLSIC) form the signal peptide. Residues 23–42 (EEKRENEDEEEQEDDEQSEE) constitute a propeptide that is removed on maturation.

The protein belongs to the frog skin active peptide (FSAP) family. Dermaseptin subfamily. Expressed by the skin glands.

It is found in the secreted. Possesses a potent antimicrobial activity against Gram-positive and Gram-negative bacteria. Probably acts by disturbing membrane functions with its amphipathic structure. The chain is Dermaseptin-DA2 from Agalychnis dacnicolor (Giant Mexican leaf frog).